The sequence spans 318 residues: cAMP/cGMP dual specificity phosphodiesterase MT0825 (318 aa).

Residues Asp-21, His-23, and Asp-63 each coordinate Fe cation. Residues His-23, Asp-63, and 97–98 (NH) contribute to the AMP site. Positions 63, 97, 169, and 207 each coordinate Mn(2+). His-209 serves as a coordination point for Fe cation. His-209 is a binding site for AMP. Residues 278 to 318 (PGQARRKIAESGIFIEPSRRDSLFKHPPMVLTSSAPRSPVD) are C-terminal extension.

The protein belongs to the cyclic nucleotide phosphodiesterase class-III family. Homodimer. Requires Fe(3+) as cofactor. Mn(2+) serves as cofactor.

The protein resides in the cytoplasm. Its subcellular location is the cell membrane. The protein localises to the secreted. It localises to the cell wall. It is found in the cell envelope. It catalyses the reaction a nucleoside 2',3'-cyclic phosphate + H2O = a nucleoside 3'-phosphate + H(+). It carries out the reaction 2',3'-cyclophospho-AMP + H2O = 3'-AMP + H(+). The enzyme catalyses 2',3'-cyclophospho-GMP + H2O = 3'-GMP + H(+). The catalysed reaction is a nucleoside 3',5'-cyclic phosphate + H2O = a nucleoside 5'-phosphate + H(+). It catalyses the reaction 3',5'-cyclic AMP + H2O = AMP + H(+). It carries out the reaction 3',5'-cyclic GMP + H2O = GMP + H(+). Functionally, cyclic nucleotide phosphodiesterase with a dual-specificity for the second messengers cAMP and cGMP. The protein is cAMP/cGMP dual specificity phosphodiesterase MT0825 of Mycobacterium tuberculosis (strain CDC 1551 / Oshkosh).